Here is a 232-residue protein sequence, read N- to C-terminus: Large ribosomal subunit protein uL1 (232 aa).

Belongs to the universal ribosomal protein uL1 family. As to quaternary structure, part of the 50S ribosomal subunit.

Binds directly to 23S rRNA. The L1 stalk is quite mobile in the ribosome, and is involved in E site tRNA release. Functionally, protein L1 is also a translational repressor protein, it controls the translation of the L11 operon by binding to its mRNA. This is Large ribosomal subunit protein uL1 from Mesorhizobium japonicum (strain LMG 29417 / CECT 9101 / MAFF 303099) (Mesorhizobium loti (strain MAFF 303099)).